The sequence spans 461 residues: Mycosin-3 (461 aa).

The N-terminal stretch at 1–25 is a signal peptide; the sequence is MIRAAFACLAATVVVAGWWTPPAWA. The region spanning 64 to 397 is the Peptidase S8 domain; the sequence is DPGVPTPSQT…AGNLDAVAAL (334 aa). Catalysis depends on charge relay system residues Asp-95, His-126, and Ser-342. A helical transmembrane segment spans residues 432 to 452; it reads AFAGAAALSVLVGLTAATVAI.

Belongs to the peptidase S8 family.

It localises to the cell membrane. The polypeptide is Mycosin-3 (Mycobacterium tuberculosis (strain ATCC 25618 / H37Rv)).